The following is a 433-amino-acid chain: Lipase 2 (433 aa).

The short motif at 165-167 (HGG) is the Involved in the stabilization of the negatively charged intermediate by the formation of the oxyanion hole element. Residue S239 is the Charge relay system of the active site. Residues D361 and H391 contribute to the active site.

The protein belongs to the 'GDXG' lipolytic enzyme family.

It catalyses the reaction a triacylglycerol + H2O = a diacylglycerol + a fatty acid + H(+). This Moraxella sp. (strain TA144) protein is Lipase 2 (lip2).